Here is a 245-residue protein sequence, read N- to C-terminus: Cuticle protein (245 aa).

The region spanning 25–86 is the Chitin-binding type R&amp;R domain; that stretch reads VSYAAAPALV…TGDSKSQQES (62 aa). The tract at residues 79–100 is disordered; sequence DSKSQQESRSGDVVQGSYSVVD. 3 consecutive repeat copies span residues 92-95, 108-111, and 118-121.

In terms of biological role, component of the cuticle of African malaria mosquito. The protein is Cuticle protein (Ccp84Ab) of Anopheles gambiae (African malaria mosquito).